The following is a 542-amino-acid chain: Adenine deaminase (542 aa).

The protein belongs to the metallo-dependent hydrolases superfamily. Adenine deaminase family. Requires Mn(2+) as cofactor.

It carries out the reaction adenine + H2O + H(+) = hypoxanthine + NH4(+). The protein is Adenine deaminase of Methanosphaera stadtmanae (strain ATCC 43021 / DSM 3091 / JCM 11832 / MCB-3).